The chain runs to 419 residues: UDP-N-acetylglucosamine 1-carboxyvinyltransferase (419 aa).

22–23 is a binding site for phosphoenolpyruvate; sequence KN. Residue Arg93 participates in UDP-N-acetyl-alpha-D-glucosamine binding. The Proton donor role is filled by Cys117. At Cys117 the chain carries 2-(S-cysteinyl)pyruvic acid O-phosphothioketal. UDP-N-acetyl-alpha-D-glucosamine contacts are provided by Asp307 and Ile329.

It belongs to the EPSP synthase family. MurA subfamily.

The protein localises to the cytoplasm. The catalysed reaction is phosphoenolpyruvate + UDP-N-acetyl-alpha-D-glucosamine = UDP-N-acetyl-3-O-(1-carboxyvinyl)-alpha-D-glucosamine + phosphate. It participates in cell wall biogenesis; peptidoglycan biosynthesis. Cell wall formation. Adds enolpyruvyl to UDP-N-acetylglucosamine. In Shewanella piezotolerans (strain WP3 / JCM 13877), this protein is UDP-N-acetylglucosamine 1-carboxyvinyltransferase.